We begin with the raw amino-acid sequence, 177 residues long: MLWFVVGALFPALLLAAPPPINKLALFPDKSAWCEAKNITQIVGHSGCESKSIQNRACLGQCFSYSVPNTFPQSTESLVHCDSCMPAQSMWEIVTLDCPGNDEIPRVDKLVEKILHCSCQACGKEPSHEGALFNVYLNAEENMPAEGPGPHHYAHHQQEVEEPPASSHHHHEEEGDE.

The N-terminal stretch at 1–16 is a signal peptide; the sequence is MLWFVVGALFPALLLA. 5 disulfides stabilise this stretch: Cys-34–Cys-84, Cys-48–Cys-98, Cys-58–Cys-117, Cys-62–Cys-119, and Cys-81–Cys-122. The region spanning 34-123 is the CTCK domain; the sequence is CEAKNITQIV…ILHCSCQACG (90 aa). The tract at residues 143-177 is disordered; the sequence is MPAEGPGPHHYAHHQQEVEEPPASSHHHHEEEGDE.

Belongs to the DAN family.

The protein resides in the secreted. May act as a tumor suppressor. The chain is Neuroblastoma suppressor of tumorigenicity 1 (NBL1) from Gallus gallus (Chicken).